The following is a 586-amino-acid chain: Glutamate--tRNA ligase (586 aa).

A 'HIGH' region motif is present at residues 114-124 (PNPNGPWHVGH). Basic and acidic residues-rich tracts occupy residues 431–443 (ARGE…HEAV) and 459–468 (HPEHPDRGDR). The disordered stretch occupies residues 431–468 (ARGEGPEESHEAVEVPVDDGPDEATPQVHPEHPDRGDR).

The protein belongs to the class-I aminoacyl-tRNA synthetase family. Glutamate--tRNA ligase type 2 subfamily.

It is found in the cytoplasm. It carries out the reaction tRNA(Glu) + L-glutamate + ATP = L-glutamyl-tRNA(Glu) + AMP + diphosphate. In terms of biological role, catalyzes the attachment of glutamate to tRNA(Glu) in a two-step reaction: glutamate is first activated by ATP to form Glu-AMP and then transferred to the acceptor end of tRNA(Glu). This Halobacterium salinarum (strain ATCC 29341 / DSM 671 / R1) protein is Glutamate--tRNA ligase.